The chain runs to 410 residues: NADH-quinone oxidoreductase subunit H (410 aa).

9 helical membrane-spanning segments follow: residues 16-36 (LILA…LAAI), 84-104 (WIYL…FAVI), 124-144 (LPVA…GIVL), 165-185 (VISY…YAGT), 198-218 (VWFI…MVGE), 260-280 (VSAL…PISI), 288-308 (WWPL…FMWL), 320-340 (FMRL…AIVA), and 353-373 (WVTA…LLAW). The segment at 384 to 410 (SHSPPAQSSDHGAFPVPPLPVKEPADA) is disordered.

It belongs to the complex I subunit 1 family. As to quaternary structure, NDH-1 is composed of 14 different subunits. Subunits NuoA, H, J, K, L, M, N constitute the membrane sector of the complex.

It localises to the cell membrane. The enzyme catalyses a quinone + NADH + 5 H(+)(in) = a quinol + NAD(+) + 4 H(+)(out). In terms of biological role, NDH-1 shuttles electrons from NADH, via FMN and iron-sulfur (Fe-S) centers, to quinones in the respiratory chain. The immediate electron acceptor for the enzyme in this species is believed to be menaquinone. Couples the redox reaction to proton translocation (for every two electrons transferred, four hydrogen ions are translocated across the cytoplasmic membrane), and thus conserves the redox energy in a proton gradient. This is NADH-quinone oxidoreductase subunit H from Mycolicibacterium gilvum (strain PYR-GCK) (Mycobacterium gilvum (strain PYR-GCK)).